The sequence spans 797 residues: LPS-assembly protein LptD (797 aa).

A signal peptide spans 1–30 (MKEGRKRLRAGYCYMLAGVVGVASTGSSRA).

The protein belongs to the LptD family. In terms of assembly, component of the lipopolysaccharide transport and assembly complex. Interacts with LptE and LptA.

The protein localises to the cell outer membrane. Its function is as follows. Together with LptE, is involved in the assembly of lipopolysaccharide (LPS) at the surface of the outer membrane. The polypeptide is LPS-assembly protein LptD (Hahella chejuensis (strain KCTC 2396)).